Reading from the N-terminus, the 490-residue chain is Tektin-3 (490 aa).

T7 and T9 each carry an O-linked (GalNAc...) threonine glycan. N41, N86, N111, and N276 each carry an N-linked (GlcNAc...) asparagine glycan. Residues 419–456 (RLVNEVYEVDETIQTLQQRLRDSEDTLQSLAHTKATLE) adopt a coiled-coil conformation.

This sequence belongs to the tektin family. In terms of assembly, microtubule inner protein component of sperm flagellar doublet microtubules. Interacts with TEKT1, TEKT2, TEKT4 and TEKT5. Interacts with CCDC38. Post-translationally, N- and O-glycosylated. In terms of processing, may be proteolytically processed during the epididymal transit of spermatozoa. Ubiquitinated, leading to its degradation. Deubiquitinated by USP16, promoting its stability. In terms of tissue distribution, expressed in epididymal sperm (at protein level).

The protein resides in the cytoplasm. It is found in the cytoskeleton. The protein localises to the cilium axoneme. It localises to the flagellum axoneme. Its subcellular location is the cytoplasmic vesicle. The protein resides in the secretory vesicle. It is found in the acrosome outer membrane. In terms of biological role, microtubule inner protein (MIP) part of the dynein-decorated doublet microtubules (DMTs) in cilia and flagellar axoneme. Forms filamentous polymers in the walls of ciliary and flagellar microtubules. Required for normal sperm mobility. The protein is Tektin-3 (Tekt3) of Rattus norvegicus (Rat).